The sequence spans 355 residues: Probable aldo-keto reductase 3 (355 aa).

Residue Tyr-70 is the Proton donor of the active site. Residue His-138 participates in substrate binding. Residue 217–227 participates in NADP(+) binding; the sequence is SPLGRGFFSSG.

It belongs to the aldo/keto reductase family.

This Oryza sativa subsp. japonica (Rice) protein is Probable aldo-keto reductase 3.